Reading from the N-terminus, the 315-residue chain is Methionyl-tRNA formyltransferase (315 aa).

Residue 113–116 (SLLP) coordinates (6S)-5,6,7,8-tetrahydrofolate.

Belongs to the Fmt family.

The enzyme catalyses L-methionyl-tRNA(fMet) + (6R)-10-formyltetrahydrofolate = N-formyl-L-methionyl-tRNA(fMet) + (6S)-5,6,7,8-tetrahydrofolate + H(+). In terms of biological role, attaches a formyl group to the free amino group of methionyl-tRNA(fMet). The formyl group appears to play a dual role in the initiator identity of N-formylmethionyl-tRNA by promoting its recognition by IF2 and preventing the misappropriation of this tRNA by the elongation apparatus. This chain is Methionyl-tRNA formyltransferase, found in Shigella flexneri serotype 5b (strain 8401).